Reading from the N-terminus, the 535-residue chain is CTP synthase (535 aa).

The segment at 1-267 (MTKYIFVTGG…DKLVCEHMKL (267 aa)) is amidoligase domain. Ser-13 provides a ligand contact to CTP. UTP is bound at residue Ser-13. Position 14-19 (14-19 (SLGKGI)) interacts with ATP. Tyr-54 is a binding site for L-glutamine. Asp-71 is an ATP binding site. Positions 71 and 141 each coordinate Mg(2+). CTP-binding positions include 148–150 (DIE), 188–193 (KTKPTQ), and Lys-224. UTP contacts are provided by residues 188 to 193 (KTKPTQ) and Lys-224. The Glutamine amidotransferase type-1 domain occupies 292–534 (TIGLVGKYVE…VGASLQASES (243 aa)). L-glutamine is bound at residue Gly-354. The Nucleophile; for glutamine hydrolysis role is filled by Cys-381. L-glutamine is bound by residues 382 to 385 (LGMQ), Glu-405, and Arg-462. Active-site residues include His-507 and Glu-509.

It belongs to the CTP synthase family. Homotetramer.

It carries out the reaction UTP + L-glutamine + ATP + H2O = CTP + L-glutamate + ADP + phosphate + 2 H(+). The catalysed reaction is L-glutamine + H2O = L-glutamate + NH4(+). It catalyses the reaction UTP + NH4(+) + ATP = CTP + ADP + phosphate + 2 H(+). It participates in pyrimidine metabolism; CTP biosynthesis via de novo pathway; CTP from UDP: step 2/2. With respect to regulation, allosterically activated by GTP, when glutamine is the substrate; GTP has no effect on the reaction when ammonia is the substrate. The allosteric effector GTP functions by stabilizing the protein conformation that binds the tetrahedral intermediate(s) formed during glutamine hydrolysis. Inhibited by the product CTP, via allosteric rather than competitive inhibition. Catalyzes the ATP-dependent amination of UTP to CTP with either L-glutamine or ammonia as the source of nitrogen. Regulates intracellular CTP levels through interactions with the four ribonucleotide triphosphates. The polypeptide is CTP synthase (Bacillus pumilus (strain SAFR-032)).